Here is a 445-residue protein sequence, read N- to C-terminus: MTLQKDKVIKWVRFTPPQVLAIGFFLTIIIGAVLLMLPISTTKPLSWIDALFTAASATTVTGLAVVDTGTQFTVFGQTVIMGLIQIGGLGFMTFAVLIVMILGKKIGLKERMLVQEALNQPTIGGVIGLVKVLFLFSISIELIAALILSIRLVPQYGWSSGLFASLFHAISAFNNAGFSLWPDNLMSYVGDPTVNLVITFLFITGGIGFTVLFDVMKNRRFKTFSLHTKLMLTGTLMLNAIAMLTVFILEYSNPGTLGHLHIVDKLWASYFQAVTPRTAGFNSLDFGSMREGTIVFTLLLMFIGAGSASTASGIKLTTFIVILTSVIAYLRGKKETVIFRRSIKYPIIIKALAVSVTSLFIVFLGIFALTITEQAPFLQIVFETFSAFGTVGLTMGLTPELTTAGKCIIIVIMFIGRIGPLTFVFSFAKTEQSNIRYPDGEVFTG.

12 helical membrane-spanning segments follow: residues 19–39 (VLAIGFFLTIIIGAVLLMLPI), 46–66 (SWIDALFTAASATTVTGLAVV), 79–99 (VIMGLIQIGGLGFMTFAVLIV), 127–147 (IGLVKVLFLFSISIELIAALI), 161–181 (GLFASLFHAISAFNNAGFSLW), 196–216 (LVITFLFITGGIGFTVLFDVM), 230–250 (LMLTGTLMLNAIAMLTVFILE), 286–306 (FGSMREGTIVFTLLLMFIGAG), 313–333 (GIKLTTFIVILTSVIAYLRGK), 351–371 (ALAVSVTSLFIVFLGIFALTI), 377–397 (FLQIVFETFSAFGTVGLTMGL), and 408–428 (IIIVIMFIGRIGPLTFVFSFA).

It belongs to the TrkH potassium transport family. Ktr (TC 2.A.38.4) subfamily. Homodimer. Part of the KtrAB complex formed by an octameric catalytic ring of KtrA and a membrane associated dimer of KtrB forming a potassium channel.

The protein localises to the cell membrane. Integral membrane subunit of the KtrAB potassium uptake transporter. The 2 major potassium transporter complexes KtrAB and KtrCD confer resistance to both suddenly imposed and prolonged osmotic stress. The polypeptide is Ktr system potassium uptake protein B (ktrB) (Bacillus subtilis (strain 168)).